A 208-amino-acid polypeptide reads, in one-letter code: Ribosome maturation factor RimP (208 aa).

Positions Gly-175–Gln-208 are disordered. The span at Asp-177–Gln-208 shows a compositional bias: acidic residues.

This sequence belongs to the RimP family.

Its subcellular location is the cytoplasm. In terms of biological role, required for maturation of 30S ribosomal subunits. The sequence is that of Ribosome maturation factor RimP from Kineococcus radiotolerans (strain ATCC BAA-149 / DSM 14245 / SRS30216).